Consider the following 205-residue polypeptide: High frequency lysogenization protein HflD homolog (205 aa).

It belongs to the HflD family.

It is found in the cytoplasm. The protein localises to the cell inner membrane. In Hahella chejuensis (strain KCTC 2396), this protein is High frequency lysogenization protein HflD homolog.